We begin with the raw amino-acid sequence, 340 residues long: Uroporphyrinogen decarboxylase (340 aa).

Residues 21 to 25 (RQAGR), F40, D71, Y146, S201, and H316 contribute to the substrate site.

The protein belongs to the uroporphyrinogen decarboxylase family. In terms of assembly, homodimer.

It localises to the cytoplasm. The catalysed reaction is uroporphyrinogen III + 4 H(+) = coproporphyrinogen III + 4 CO2. It participates in porphyrin-containing compound metabolism; protoporphyrin-IX biosynthesis; coproporphyrinogen-III from 5-aminolevulinate: step 4/4. Its function is as follows. Catalyzes the decarboxylation of four acetate groups of uroporphyrinogen-III to yield coproporphyrinogen-III. The sequence is that of Uroporphyrinogen decarboxylase from Rickettsia bellii (strain RML369-C).